The chain runs to 122 residues: Large ribosomal subunit protein uL18 (122 aa).

The tract at residues 1–27 (MSNLSRKQQTQKRHRRLRRHLNGTAQR) is disordered. Residues 9–21 (QTQKRHRRLRRHL) show a composition bias toward basic residues.

Belongs to the universal ribosomal protein uL18 family. Part of the 50S ribosomal subunit; part of the 5S rRNA/L5/L18/L25 subcomplex. Contacts the 5S and 23S rRNAs.

In terms of biological role, this is one of the proteins that bind and probably mediate the attachment of the 5S RNA into the large ribosomal subunit, where it forms part of the central protuberance. The protein is Large ribosomal subunit protein uL18 of Prochlorococcus marinus (strain MIT 9303).